The following is a 257-amino-acid chain: Type III pantothenate kinase (257 aa).

6–13 serves as a coordination point for ATP; that stretch reads DCGNTNTV. 107–110 is a binding site for substrate; that stretch reads GPDR. The active-site Proton acceptor is aspartate 109. Aspartate 129 is a K(+) binding site. ATP is bound at residue threonine 132. Threonine 184 serves as a coordination point for substrate.

It belongs to the type III pantothenate kinase family. As to quaternary structure, homodimer. The cofactor is NH4(+). It depends on K(+) as a cofactor.

It localises to the cytoplasm. The catalysed reaction is (R)-pantothenate + ATP = (R)-4'-phosphopantothenate + ADP + H(+). It functions in the pathway cofactor biosynthesis; coenzyme A biosynthesis; CoA from (R)-pantothenate: step 1/5. In terms of biological role, catalyzes the phosphorylation of pantothenate (Pan), the first step in CoA biosynthesis. The polypeptide is Type III pantothenate kinase (Roseobacter denitrificans (strain ATCC 33942 / OCh 114) (Erythrobacter sp. (strain OCh 114))).